Consider the following 555-residue polypeptide: Formate--tetrahydrofolate ligase (555 aa).

Residue 65–72 (TPAGEGKT) coordinates ATP.

The protein belongs to the formate--tetrahydrofolate ligase family.

It carries out the reaction (6S)-5,6,7,8-tetrahydrofolate + formate + ATP = (6R)-10-formyltetrahydrofolate + ADP + phosphate. Its pathway is one-carbon metabolism; tetrahydrofolate interconversion. In Caldanaerobacter subterraneus subsp. tengcongensis (strain DSM 15242 / JCM 11007 / NBRC 100824 / MB4) (Thermoanaerobacter tengcongensis), this protein is Formate--tetrahydrofolate ligase.